The chain runs to 83 residues: Aminoacyl carrier protein (83 aa).

Residues Met-1–Lys-80 form the Carrier domain. O-(pantetheine 4'-phosphoryl)serine is present on Ser-35.

Post-translationally, 4'-phosphopantetheine is transferred from CoA to a specific serine of the apo-form of this carrier protein.

Functionally, aminoacyl carrier protein. Can be charged with L-alanine, L-glycine or L-serine, via the formation of a thioester bond between the amino acid and the 4'-phosphopantetheinyl prosthetic group, catalyzed by the Atu2573 ligase. This chain is Aminoacyl carrier protein, found in Agrobacterium fabrum (strain C58 / ATCC 33970) (Agrobacterium tumefaciens (strain C58)).